The sequence spans 247 residues: tRNA (guanine-N(7)-)-methyltransferase (247 aa).

Residues glycine 70, 93-94 (EI), 128-129 (NA), and leucine 148 contribute to the S-adenosyl-L-methionine site. The active site involves aspartate 151. 226–228 (SEE) contributes to the S-adenosyl-L-methionine binding site.

This sequence belongs to the class I-like SAM-binding methyltransferase superfamily. TrmB family.

It is found in the nucleus. It catalyses the reaction guanosine(46) in tRNA + S-adenosyl-L-methionine = N(7)-methylguanosine(46) in tRNA + S-adenosyl-L-homocysteine. It functions in the pathway tRNA modification; N(7)-methylguanine-tRNA biosynthesis. Catalyzes the formation of N(7)-methylguanine at position 46 (m7G46) in tRNA. In Drosophila virilis (Fruit fly), this protein is tRNA (guanine-N(7)-)-methyltransferase.